Consider the following 217-residue polypeptide: MPTNCAAAGCAATYNKHINISFHRFPLDPKRRKEWVRLVRRKNFVPGKHTFLCSKHFEASCFDLTGQTRRLKMDAVPTIFDFCTHIKSLKLKSRNLLKTNNSFPPTGPCNLKLNGSQQVLLEHSYAFRNPMEAKKRIIKLEKEIASLRKKMKTCLQRERRATRRWIKATCFVKSLEASNMLPKGISEQILPTALSNLPLEDLKSLEQDQQDKTVPIL.

The THAP-type zinc-finger motif lies at 1 to 80; the sequence is MPTNCAAAGC…LKMDAVPTIF (80 aa). The short motif at 122 to 125 is the HCFC1-binding motif (HBM) element; the sequence is EHSY.

The protein is THAP domain-containing protein 2 (Thap2) of Mus musculus (Mouse).